A 1453-amino-acid polypeptide reads, in one-letter code: DNA-directed RNA polymerase IV subunit 1 (1453 aa).

Zn(2+) is bound by residues Cys-56, Cys-59, Cys-67, His-70, Cys-97, Cys-100, and Cys-121. Mg(2+) is bound by residues Asp-447, Asp-449, and Asp-451. The interval Pro-806–Asp-818 is bridging helix.

The protein belongs to the RNA polymerase beta' chain family. In terms of assembly, component of the RNA polymerase IV complex. Interacts with NRPD2, NRPD3, NRPD3B, NRPD4, NRPD5, NRPD5B, NRPD6A, NRPD7, NRPD7B, NRPD9A, NRPD9B, NRPD10, NRPD11, NRPD12, RDR2, RDM4, CLSY1, CLSY2, CLSY3, CLSY4 and SHH1. As to expression, mostly expressed in flowers, and, to a lower extent, in leaves.

Its subcellular location is the nucleus. The catalysed reaction is RNA(n) + a ribonucleoside 5'-triphosphate = RNA(n+1) + diphosphate. Its function is as follows. DNA-dependent RNA polymerase catalyzes the transcription of DNA into RNA using the four ribonucleoside triphosphates as substrates. Largest and catalytic component of RNA polymerase IV which mediates 24-nt short-interfering RNAs (siRNA) accumulation. Implicated in siRNA-directed heterochromatin formation through the action of DCL3 and AGO4, and subsequent DNA methylation-dependent silencing of targeted sequences. Essential component of a self-reinforcing loop coupling de novo DNA methylation to siRNA production. Required for intercellular but not intracellular RNA interference (RNAi) leading to systemic post-transcriptional gene silencing. Involved in the maintenance of post-transcriptional RNA silencing. The protein is DNA-directed RNA polymerase IV subunit 1 (NRPD1) of Arabidopsis thaliana (Mouse-ear cress).